Consider the following 853-residue polypeptide: DNA mismatch repair protein MutS (853 aa).

614 to 621 (GPNMGGKS) provides a ligand contact to ATP.

It belongs to the DNA mismatch repair MutS family.

In terms of biological role, this protein is involved in the repair of mismatches in DNA. It is possible that it carries out the mismatch recognition step. This protein has a weak ATPase activity. This Escherichia coli O6:H1 (strain CFT073 / ATCC 700928 / UPEC) protein is DNA mismatch repair protein MutS.